Reading from the N-terminus, the 286-residue chain is Peroxisomal membrane protein pex14 (286 aa).

Residues Thr-61–Trp-69 carry the SH3-binding motif. A coiled-coil region spans residues Lys-122–Gln-214. Positions Lys-218–Asp-239 are disordered.

The protein belongs to the peroxin-14 family. As to quaternary structure, interacts with PEX13 (via SH3 domain); forming the PEX13-PEX14 docking complex. Interacts with PEX5 (via WxxxF/Y motifs).

Its subcellular location is the peroxisome membrane. Its function is as follows. Component of the PEX13-PEX14 docking complex, a translocon channel that specifically mediates the import of peroxisomal cargo proteins bound to PEX5 receptor. The PEX13-PEX14 docking complex forms a large import pore which can be opened to a diameter of about 9 nm. Mechanistically, PEX5 receptor along with cargo proteins associates with the PEX14 subunit of the PEX13-PEX14 docking complex in the cytosol, leading to the insertion of the receptor into the organelle membrane with the concomitant translocation of the cargo into the peroxisome matrix. This Schizosaccharomyces pombe (strain 972 / ATCC 24843) (Fission yeast) protein is Peroxisomal membrane protein pex14 (pex14).